A 1170-amino-acid chain; its full sequence is Thrombospondin-1 (1170 aa).

Positions Met1–Thr18 are cleaved as a signal peptide. The tract at residues Arg47–Arg95 is heparin-binding. One can recognise a Laminin G-like domain in the interval Asn65 to Cys270. Cys171 and Cys232 are joined by a disulfide. Residues Asn248 and Asn360 are each glycosylated (N-linked (GlcNAc...) asparagine). A VWFC domain is found at Pro316 to Trp373. TSP type-1 domains are found at residues Asp379–Asp429, Asp435–Pro490, and Asn492–Pro547. Residue Trp385 is glycosylated (C-linked (Man) tryptophan). Disulfide bonds link Cys391–Cys423, Cys395–Cys428, and Cys406–Cys413. The O-linked (Fuc...) serine glycan is linked to Ser394. 2 C-linked (Man) tryptophan glycosylation sites follow: Trp438 and Trp441. Disulfide bonds link Cys447-Cys484, Cys451-Cys489, and Cys462-Cys474. An O-linked (Fuc...) threonine glycan is attached at Thr450. Trp498 carries a C-linked (Man) tryptophan glycan. Disulfide bonds link Cys504–Cys541, Cys508–Cys546, Cys519–Cys531, Cys551–Cys562, Cys556–Cys572, Cys575–Cys586, Cys592–Cys608, Cys599–Cys617, Cys620–Cys644, Cys650–Cys663, Cys657–Cys676, Cys678–Cys689, Cys705–Cys713, Cys718–Cys738, Cys754–Cys774, Cys777–Cys797, Cys813–Cys833, Cys836–Cys856, Cys874–Cys894, Cys910–Cys930, and Cys946–Cys1167. The O-linked (Fuc...) threonine glycan is linked to Thr507. Residues Cys531–Val1152 form an involved in retention in extracellular matrix (ECM); involved in trimer formation region. The EGF-like 1 domain occupies Pro547–Thr587. O-linked (Xyl) serine glycosylation occurs at Ser553. The 45-residue stretch at Pro646–Gly690 folds into the EGF-like 2 domain. TSP type-3 repeat units lie at residues Glu691–Gln726, Glu727–Gln762, Tyr763–Gln785, Ala786–Gln821, Arg822–Gln844, Leu845–Gln882, Ala883–Gln918, and Lys919–Glu954. Asn708 carries an N-linked (GlcNAc...) asparagine glycan. Residues Glu839 to Phe934 are disordered. Basic and acidic residues-rich tracts occupy residues His840–Asp854, Ala883–Cys894, and Asp917–Phe934. The short motif at Arg926 to Asp928 is the Cell attachment site element. The region spanning Arg958–Pro1170 is the TSP C-terminal domain. Residue Asn1067 is glycosylated (N-linked (GlcNAc...) asparagine).

The protein belongs to the thrombospondin family. In terms of assembly, homotrimer; disulfide-linked. Can bind to fibrinogen, fibronectin, laminin, type V collagen and integrins alpha-V/beta-1, alpha-V/beta-3 and alpha-IIb/beta-3. Binds heparin. Interacts (via the C-terminal domain) with CD47. Interacts (via the TSP type I repeats) with CD36; the interaction conveys an antiangiogenic effect. Interacts (via the TSP type I repeats) with HRG; the interaction blocks the antiangiogenic effect of THBS1 with CD36. Interacts with ATF6 (via lumenal domain). Interacts with FN1; this interaction is enhanced by TNFAIP6, which may act as a bridging molecule between FN1 and THBS1. Interacts with SIRPA; the interaction stimulates phosphorylation of SIRPA. In terms of tissue distribution, expressed by platelets (at protein level). Expressed by monocyte-derived immature and mature dendritic cells (at protein level).

It localises to the secreted. Its subcellular location is the cell surface. It is found in the extracellular space. The protein resides in the extracellular matrix. The protein localises to the endoplasmic reticulum. It localises to the sarcoplasmic reticulum. In terms of biological role, adhesive glycoprotein that mediates cell-to-cell and cell-to-matrix interactions. Multifunctional, involved in inflammation, angiogenesis, wound healing, reactive oxygen species (ROS) signaling, nitrous oxide (NO) signaling, apoptosis, senescence, aging, cellular self-renewal, stemness, and cardiovascular and metabolic homeostasis. Negatively modulates dendritic cell activation and cytokine release, as part of an autocrine feedback loop, contributing to the resolution of inflammation and immune homeostasis. Ligand for receptor CD47. Modulates nitrous oxide (NO) signaling via CD47, hence playing a role as a pressor agent, supporting blood pressure. Plays a role in endothelial cell senescence, acting via CD47, by increasing the abundance and activation of NADPH oxidase NOX1, and so generating excess ROS. Inhibits stem cell self-renewal, acting via CD47 signaling, probably by regulation of the stem cell transcription factors POU5F1/OCT4, SOX2, MYC/c-Myc and KLF4. Negatively modulates wound healing, acting via CD47. Ligand for receptor CD36. Involved in inducing apoptosis in podocytes in response to elevated free fatty acids, acting via CD36. Plays a role in suppressing angiogenesis, acting, depending on context, via CD36 or CD47. Promotes cellular senescence in a TP53-CDKN1A-RB1 signaling-dependent manner. Ligand for immunoglobulin-like cell surface receptor SIRPA. Involved in ROS signaling in non-phagocytic cells, stimulating NADPH oxidase-derived ROS production, acting via interaction with SIRPA. Plays a role in metabolic dysfunction in diet-induced obesity, perhaps acting by exacerbating adipose inflammatory activity; its effects may be mediated, at least in part, through enhanced adipocyte proliferation. Plays a role in ER stress response, via its interaction with the activating transcription factor 6 alpha (ATF6) which produces adaptive ER stress response factors. May be involved in age-related conditions, including metabolic dysregulation, during normal aging. The sequence is that of Thrombospondin-1 from Homo sapiens (Human).